Consider the following 282-residue polypeptide: 4-hydroxy-tetrahydrodipicolinate reductase (282 aa).

12-17 (GVTGRM) is an NAD(+) binding site. Residue Arg44 coordinates NADP(+). Residues 107–109 (GTT) and 131–134 (SSNF) each bind NAD(+). His164 (proton donor/acceptor) is an active-site residue. His165 serves as a coordination point for (S)-2,3,4,5-tetrahydrodipicolinate. The Proton donor role is filled by Lys168. 174–175 (GT) lines the (S)-2,3,4,5-tetrahydrodipicolinate pocket.

Belongs to the DapB family. In terms of assembly, homotetramer.

It localises to the cytoplasm. The enzyme catalyses (S)-2,3,4,5-tetrahydrodipicolinate + NAD(+) + H2O = (2S,4S)-4-hydroxy-2,3,4,5-tetrahydrodipicolinate + NADH + H(+). It carries out the reaction (S)-2,3,4,5-tetrahydrodipicolinate + NADP(+) + H2O = (2S,4S)-4-hydroxy-2,3,4,5-tetrahydrodipicolinate + NADPH + H(+). It participates in amino-acid biosynthesis; L-lysine biosynthesis via DAP pathway; (S)-tetrahydrodipicolinate from L-aspartate: step 4/4. In terms of biological role, catalyzes the conversion of 4-hydroxy-tetrahydrodipicolinate (HTPA) to tetrahydrodipicolinate. This Blochmanniella pennsylvanica (strain BPEN) protein is 4-hydroxy-tetrahydrodipicolinate reductase.